The sequence spans 135 residues: Basic phospholipase A2 6 (135 aa).

Cystine bridges form between Cys28–Cys87, Cys42–Cys134, Cys44–Cys60, Cys59–Cys115, Cys66–Cys108, Cys76–Cys101, and Cys94–Cys106. 3 residues coordinate Ca(2+): Tyr43, Gly45, and Gly47. His63 is a catalytic residue. Ca(2+) is bound at residue Asp64. Asp109 is an active-site residue.

The protein belongs to the phospholipase A2 family. Group I subfamily. D49 sub-subfamily. Ca(2+) serves as cofactor. As to expression, expressed by the venom gland.

It localises to the secreted. It catalyses the reaction a 1,2-diacyl-sn-glycero-3-phosphocholine + H2O = a 1-acyl-sn-glycero-3-phosphocholine + a fatty acid + H(+). Functionally, snake venom phospholipase A2 (PLA2) that inhibits neuromuscular transmission by blocking acetylcholine release from the nerve termini. PLA2 catalyzes the calcium-dependent hydrolysis of the 2-acyl groups in 3-sn-phosphoglycerides. Very weakly suppress the acetylcholine (ACh)-evoked current mediated by alpha-7-similar nAChRs in L.stagnalis neurons. The sequence is that of Basic phospholipase A2 6 from Bungarus fasciatus (Banded krait).